The sequence spans 215 residues: Ceramide-1-phosphate transfer protein (215 aa).

Aspartate 57, lysine 61, arginine 107, arginine 111, and histidine 151 together coordinate an N-acylsphingoid base 1-phosphate.

The protein belongs to the GLTP family.

It localises to the cytoplasm. Its subcellular location is the cytosol. The protein localises to the golgi apparatus. It is found in the trans-Golgi network membrane. The protein resides in the cell membrane. It localises to the endosome membrane. Its subcellular location is the nucleus outer membrane. The catalysed reaction is N-(hexadecanoyl)-sphing-4-enine-1-phosphate(in) = N-(hexadecanoyl)-sphing-4-enine-1-phosphate(out). The enzyme catalyses N-(9Z-octadecenoyl)-sphing-4-enine-1-phosphate(in) = N-(9Z-octadecenoyl)-sphing-4-enine-1-phosphate(out). Its function is as follows. Mediates the intracellular transfer of ceramide-1-phosphate (C1P) between organelle membranes and the cell membrane. Required for normal structure of the Golgi stacks. Can bind phosphoceramides with a variety of aliphatic chains, but has a preference for lipids with saturated C16:0 or monounsaturated C18:1 aliphatic chains, and is inefficient with phosphoceramides containing lignoceryl (C24:0). Plays a role in the regulation of the cellular levels of ceramide-1-phosphate, and thereby contributes to the regulation of phospholipase PLA2G4A activity and the release of arachidonic acid. Has no activity with galactosylceramide, lactosylceramide, sphingomyelin, phosphatidylcholine, phosphatidic acid and ceramide. C1P transfer is stimulated by phosphatidylserine in C1P source vesicles. Regulates autophagy and pyroptosis, but not apoptosis. The polypeptide is Ceramide-1-phosphate transfer protein (cptp) (Xenopus laevis (African clawed frog)).